Consider the following 329-residue polypeptide: Ketol-acid reductoisomerase (NADP(+)) (329 aa).

One can recognise a KARI N-terminal Rossmann domain in the interval 2–182; that stretch reads TQLFYDTDAD…GGTRAGILET (181 aa). Residues 25 to 28, Ser-51, Ser-53, and 83 to 86 each bind NADP(+); these read YGSQ and DEFQ. Residue His-108 is part of the active site. Gly-134 contacts NADP(+). Positions 183–328 constitute a KARI C-terminal knotted domain; it reads NFKEETETDL…KSLRSMFSWL (146 aa). Residues Asp-191, Glu-195, Glu-227, and Glu-231 each contribute to the Mg(2+) site. A substrate-binding site is contributed by Ser-252.

The protein belongs to the ketol-acid reductoisomerase family. The cofactor is Mg(2+).

The catalysed reaction is (2R)-2,3-dihydroxy-3-methylbutanoate + NADP(+) = (2S)-2-acetolactate + NADPH + H(+). It catalyses the reaction (2R,3R)-2,3-dihydroxy-3-methylpentanoate + NADP(+) = (S)-2-ethyl-2-hydroxy-3-oxobutanoate + NADPH + H(+). It participates in amino-acid biosynthesis; L-isoleucine biosynthesis; L-isoleucine from 2-oxobutanoate: step 2/4. The protein operates within amino-acid biosynthesis; L-valine biosynthesis; L-valine from pyruvate: step 2/4. Its function is as follows. Involved in the biosynthesis of branched-chain amino acids (BCAA). Catalyzes an alkyl-migration followed by a ketol-acid reduction of (S)-2-acetolactate (S2AL) to yield (R)-2,3-dihydroxy-isovalerate. In the isomerase reaction, S2AL is rearranged via a Mg-dependent methyl migration to produce 3-hydroxy-3-methyl-2-ketobutyrate (HMKB). In the reductase reaction, this 2-ketoacid undergoes a metal-dependent reduction by NADPH to yield (R)-2,3-dihydroxy-isovalerate. The sequence is that of Ketol-acid reductoisomerase (NADP(+)) from Prochlorococcus marinus (strain MIT 9301).